Consider the following 397-residue polypeptide: Lysophospholipid transporter LplT (397 aa).

Residues 1-17 (MSESVHTNTSLWSKGMK) lie on the Periplasmic side of the membrane. The chain crosses the membrane as a helical span at residues 18 to 38 (AVIVAQFLSAFGDNALLFATL). The Cytoplasmic segment spans residues 39–52 (ALLKAQFYPEWSQP). Residues 53 to 73 (ILQMVFVGAYILFAPFVGQVA) traverse the membrane as a helical segment. Over 74 to 90 (DSFAKGRVMMFANGLKL) the chain is Periplasmic. Residues 91-111 (LGAASICFGINPFLGYTLVGV) form a helical membrane-spanning segment. The Cytoplasmic portion of the chain corresponds to 112–144 (GAAAYSPAKYGILGELTTGSKLVKANGLMEAST). Residues 145 to 165 (IAAILLGSVAGGVLADWHVLV) traverse the membrane as a helical segment. Position 166 (Ala-166) is a topological domain, periplasmic. A helical membrane pass occupies residues 167-187 (LAACALAYGGAVVANIYIPKL). Residues 188–226 (AAARPGQSWNLINMTRSFLNACTSLWCNGETRFSLVGTS) are Cytoplasmic-facing. The chain crosses the membrane as a helical span at residues 227 to 247 (LFWGAGVTLRFLLVLWVPVAL). At 248–256 (GITDNATPT) the chain is on the periplasmic side. The helical transmembrane segment at 257 to 277 (YLNAMVAIGIVVGAGAAAKLV) threads the bilayer. Residues 278–280 (TLE) lie on the Cytoplasmic side of the membrane. Residues 281–301 (TVSRCMPAGILIGVVVLIFSL) traverse the membrane as a helical segment. Topologically, residues 302–304 (QHE) are periplasmic. A helical transmembrane segment spans residues 305-325 (LLPAYALLMLIGVLGGFFVVP). The Cytoplasmic segment spans residues 326–343 (LNALLQERGKKSVGAGNA). The chain crosses the membrane as a helical span at residues 344-364 (IAVQNLGENSAMLLMLGIYSL). Topologically, residues 365-366 (AV) are periplasmic. A helical membrane pass occupies residues 367-387 (MVGIPVVPIGIGFGALFALAI). Residues 388-397 (TALWIWQRRH) lie on the Cytoplasmic side of the membrane.

Belongs to the major facilitator superfamily. LplT (TC 2.A.1.42) family.

Its subcellular location is the cell inner membrane. Its function is as follows. Catalyzes the facilitated diffusion of 2-acyl-glycero-3-phosphoethanolamine (2-acyl-GPE) into the cell. The sequence is that of Lysophospholipid transporter LplT from Shigella dysenteriae serotype 1 (strain Sd197).